Here is a 771-residue protein sequence, read N- to C-terminus: PH and SEC7 domain-containing protein 2 (771 aa).

2 disordered regions span residues 1-67 (MEED…PDVA) and 107-136 (GDNASRSLYPDAEDPQLGLDGPGEPDVRDG). A compositionally biased stretch (basic and acidic residues) spans 47-66 (GHERRGTPADTEEPTKDPDV). Serine 191 is subject to Phosphoserine. Disordered stretches follow at residues 207-230 (GDMGAAGGDGELGSPLRRSISSSR) and 244-307 (PNGF…ANGC). The segment covering 218 to 230 (LGSPLRRSISSSR) has biased composition (low complexity). Acidic residues predominate over residues 257–266 (GDEDDDEEDT). The 203-residue stretch at 260–462 (DDDEEDTDKL…KTLYNSIKNE (203 aa)) folds into the SEC7 domain. Residues 288 to 299 (ELSSSEGLEPGS) show a composition bias toward low complexity. The 114-residue stretch at 512–625 (TTYKHGVLTR…WILRINLVAA (114 aa)) folds into the PH domain. A helical membrane pass occupies residues 622-639 (LVAAIFSAPAFPAAVSSM). Residues 651 to 680 (TTRLCQEEQLRSHENKLRQLTAELAEHRCH) are a coiled coil. Residues 739–771 (DDPSLRKTHSSPALSQGHVTGSKTTKDATGPDT) form a disordered region. The segment covering 748–761 (SSPALSQGHVTGSK) has biased composition (polar residues).

Belongs to the PSD family.

It is found in the cell membrane. Its subcellular location is the cell projection. The protein localises to the ruffle membrane. The protein resides in the cleavage furrow. This is PH and SEC7 domain-containing protein 2 (PSD2) from Homo sapiens (Human).